Consider the following 260-residue polypeptide: Putative protein phosphatase (260 aa).

In terms of domain architecture, PPM-type phosphatase spans 9 to 254; sequence FTGLSKKGPV…DNITAALVNL (246 aa).

It carries out the reaction O-phospho-L-seryl-[protein] + H2O = L-seryl-[protein] + phosphate. The enzyme catalyses O-phospho-L-threonyl-[protein] + H2O = L-threonyl-[protein] + phosphate. The chain is Putative protein phosphatase from Mycoplasma genitalium (strain ATCC 33530 / DSM 19775 / NCTC 10195 / G37) (Mycoplasmoides genitalium).